The sequence spans 147 residues: Large ribosomal subunit protein uL13 (147 aa).

The protein belongs to the universal ribosomal protein uL13 family. As to quaternary structure, part of the 50S ribosomal subunit.

This protein is one of the early assembly proteins of the 50S ribosomal subunit, although it is not seen to bind rRNA by itself. It is important during the early stages of 50S assembly. This Lactobacillus acidophilus (strain ATCC 700396 / NCK56 / N2 / NCFM) protein is Large ribosomal subunit protein uL13.